The primary structure comprises 138 residues: Large ribosomal subunit protein bL17 (138 aa).

Belongs to the bacterial ribosomal protein bL17 family. Part of the 50S ribosomal subunit. Contacts protein L32.

The polypeptide is Large ribosomal subunit protein bL17 (Dinoroseobacter shibae (strain DSM 16493 / NCIMB 14021 / DFL 12)).